The sequence spans 123 residues: Protein TraJ (123 aa).

As to quaternary structure, monomer.

It is found in the cytoplasm. Its function is as follows. Transfer of plasmid RP4 during bacterial conjugation requires the plasmid-encoded TraJ protein, which binds to a 19-base pair invert sequence repetition within the transfer origin. TraJ protein is bound to only one side of the DNA helix. This nucleoprotein structure is the initial complex in the pathway to assemble a functional relaxosome. In Escherichia coli, this protein is Protein TraJ (traJ).